We begin with the raw amino-acid sequence, 407 residues long: Tryptophan synthase beta chain (407 aa).

The residue at position 91 (lysine 91) is an N6-(pyridoxal phosphate)lysine.

The protein belongs to the TrpB family. In terms of assembly, tetramer of two alpha and two beta chains. The cofactor is pyridoxal 5'-phosphate.

It carries out the reaction (1S,2R)-1-C-(indol-3-yl)glycerol 3-phosphate + L-serine = D-glyceraldehyde 3-phosphate + L-tryptophan + H2O. It functions in the pathway amino-acid biosynthesis; L-tryptophan biosynthesis; L-tryptophan from chorismate: step 5/5. Its function is as follows. The beta subunit is responsible for the synthesis of L-tryptophan from indole and L-serine. The protein is Tryptophan synthase beta chain of Streptococcus pneumoniae serotype 2 (strain D39 / NCTC 7466).